The primary structure comprises 643 residues: Phosphomethylpyrimidine synthase (643 aa).

Substrate is bound by residues asparagine 248, methionine 277, tyrosine 306, histidine 342, 362–364, 403–406, and glutamate 442; these read SRG and DGLR. Histidine 446 contacts Zn(2+). Tyrosine 469 is a binding site for substrate. Residue histidine 510 participates in Zn(2+) binding. The [4Fe-4S] cluster site is built by cysteine 590, cysteine 593, and cysteine 598.

Belongs to the ThiC family. Homodimer. It depends on [4Fe-4S] cluster as a cofactor.

The enzyme catalyses 5-amino-1-(5-phospho-beta-D-ribosyl)imidazole + S-adenosyl-L-methionine = 4-amino-2-methyl-5-(phosphooxymethyl)pyrimidine + CO + 5'-deoxyadenosine + formate + L-methionine + 3 H(+). The protein operates within cofactor biosynthesis; thiamine diphosphate biosynthesis. Its function is as follows. Catalyzes the synthesis of the hydroxymethylpyrimidine phosphate (HMP-P) moiety of thiamine from aminoimidazole ribotide (AIR) in a radical S-adenosyl-L-methionine (SAM)-dependent reaction. The sequence is that of Phosphomethylpyrimidine synthase from Burkholderia cenocepacia (strain ATCC BAA-245 / DSM 16553 / LMG 16656 / NCTC 13227 / J2315 / CF5610) (Burkholderia cepacia (strain J2315)).